We begin with the raw amino-acid sequence, 222 residues long: Small ribosomal subunit protein uS7m (222 aa).

The N-terminal 14 residues, 1–14, are a transit peptide targeting the mitochondrion; it reads MTTKLARFAQKRWI.

It belongs to the universal ribosomal protein uS7 family. As to quaternary structure, component of the mitochondrial ribosome small subunit (28S) which comprises a 12S rRNA and about 30 distinct proteins.

It is found in the mitochondrion. This chain is Small ribosomal subunit protein uS7m (mrps-7), found in Caenorhabditis elegans.